Consider the following 234-residue polypeptide: Sugar fermentation stimulation protein homolog (234 aa).

It belongs to the SfsA family.

This is Sugar fermentation stimulation protein homolog from Enterobacter sp. (strain 638).